Consider the following 151-residue polypeptide: Deoxyuridine 5'-triphosphate nucleotidohydrolase (151 aa).

Residues 70-72, asparagine 83, 87-89, and methionine 97 each bind substrate; these read RSG and LID.

Belongs to the dUTPase family. Requires Mg(2+) as cofactor.

The enzyme catalyses dUTP + H2O = dUMP + diphosphate + H(+). Its pathway is pyrimidine metabolism; dUMP biosynthesis; dUMP from dCTP (dUTP route): step 2/2. In terms of biological role, this enzyme is involved in nucleotide metabolism: it produces dUMP, the immediate precursor of thymidine nucleotides and it decreases the intracellular concentration of dUTP so that uracil cannot be incorporated into DNA. The sequence is that of Deoxyuridine 5'-triphosphate nucleotidohydrolase from Actinobacillus pleuropneumoniae serotype 7 (strain AP76).